The chain runs to 121 residues: uncharacterized protein (121 aa).

The next 3 helical transmembrane spans lie at 2-22 (VFVTIIIIINISYNIYNIYTI), 42-62 (FICIYVCISGGNMPLWAYILF), and 89-109 (IFFAFCCHHIWSLLPHHLSIF).

Its subcellular location is the membrane. This is an uncharacterized protein from Saccharomyces cerevisiae (strain ATCC 204508 / S288c) (Baker's yeast).